The primary structure comprises 858 residues: Sarcolemmal membrane-associated protein (858 aa).

Residues 1 to 165 form a necessary for targeting to centrosomes region; sequence MPSALAIFTC…AANTPSMYSQ (165 aa). Residues 1–832 are Cytoplasmic-facing; the sequence is MPSALAIFTC…REKGNNKPWP (832 aa). In terms of domain architecture, FHA spans 28–85; it reads IKIGRSVARCRPAQNNATFDCKVLSRNHALVWFDHKTSKFYLQDTKSSNGTFINSQRL. Ser-150 carries the post-translational modification Phosphoserine. Coiled coils occupy residues 169–204 and 232–381; these read QLSQYLQEALHREQMLEQKLATLQRLLAITQEASDT and NQTE…ALQV. Over residues 456 to 470 the composition is skewed to basic and acidic residues; that stretch reads KLSKEENQAKAKESD. The segment at 456–492 is disordered; it reads KLSKEENQAKAKESDLSDTLSPSKEKSSDDTTDDAQM. Residues Ser-472 and Ser-476 each carry the phosphoserine modification. Residues 516–829 adopt a coiled-coil conformation; sequence QAETEAKQDT…KLLREKGNNK (314 aa). A helical; Anchor for type IV membrane protein membrane pass occupies residues 833–853; it reads WMPMVAALVAVTAMVLYVPGL. At 854–858 the chain is on the extracellular side; that stretch reads ARASP.

Belongs to the SLMAP family. In terms of assembly, homodimer. Interacts with myosin. Interacts with SIKE1 and both associate with the STRIPAK core complex composed of PP2A catalytic and scaffolding subunits, the striatins (PP2A regulatory subunits), the striatin-associated proteins MOB4, STRIP1 and STRIP2, PDCD10 and members of the STE20 kinases, such as STK24 and STK26. Interacts (via FHA domain) with STK3 (when phosphorylated); the interaction associates STK3 with the STRIPAK complex.

The protein localises to the cell membrane. It is found in the sarcolemma. Its subcellular location is the cytoplasm. The protein resides in the cytoskeleton. It localises to the microtubule organizing center. The protein localises to the centrosome. It is found in the endoplasmic reticulum membrane. Its subcellular location is the mitochondrion membrane. Functionally, associates with the striatin-interacting phosphatase and kinase (STRIPAK) core complex, forming the extended (SIKE1:SLMAP)STRIPAK complex. The (SIKE1:SLMAP)STRIPAK complex dephosphorylates STK3 leading to the inhibition of Hippo signaling and the control of cell growth. May play a role during myoblast fusion. The protein is Sarcolemmal membrane-associated protein (Slmap) of Rattus norvegicus (Rat).